Reading from the N-terminus, the 444-residue chain is UDP-N-acetylmuramate--L-alanine ligase (444 aa).

Residue 110 to 116 (GAHGKTS) coordinates ATP.

It belongs to the MurCDEF family.

It is found in the cytoplasm. The catalysed reaction is UDP-N-acetyl-alpha-D-muramate + L-alanine + ATP = UDP-N-acetyl-alpha-D-muramoyl-L-alanine + ADP + phosphate + H(+). It functions in the pathway cell wall biogenesis; peptidoglycan biosynthesis. Functionally, cell wall formation. The sequence is that of UDP-N-acetylmuramate--L-alanine ligase from Streptococcus pneumoniae (strain JJA).